The primary structure comprises 130 residues: Small ribosomal subunit protein uS11c (130 aa).

It belongs to the universal ribosomal protein uS11 family. As to quaternary structure, part of the 30S ribosomal subunit.

It localises to the plastid. The protein resides in the chloroplast. This Bigelowiella natans (Pedinomonas minutissima) protein is Small ribosomal subunit protein uS11c.